The chain runs to 250 residues: Proteasome subunit alpha type-4 (250 aa).

The protein belongs to the peptidase T1A family. In terms of assembly, the 26S proteasome consists of a 20S proteasome core and two 19S regulatory subunits. The 20S proteasome core is composed of 28 subunits that are arranged in four stacked rings, resulting in a barrel-shaped structure. The two end rings are each formed by seven alpha subunits, and the two central rings are each formed by seven beta subunits. The catalytic chamber with the active sites is on the inside of the barrel.

It is found in the cytoplasm. It localises to the nucleus. In terms of biological role, the proteasome is a multicatalytic proteinase complex which is characterized by its ability to cleave peptides with Arg, Phe, Tyr, Leu, and Glu adjacent to the leaving group at neutral or slightly basic pH. The proteasome has an ATP-dependent proteolytic activity. This chain is Proteasome subunit alpha type-4 (PAC1), found in Spinacia oleracea (Spinach).